The following is a 203-amino-acid chain: NAD(P)H dehydrogenase (quinone) (203 aa).

One can recognise a Flavodoxin-like domain in the interval V3–V194. FMN-binding positions include S9–I14 and T82–F84. Y11 is a binding site for NAD(+). A substrate-binding site is contributed by W102. FMN-binding positions include S117–G123 and H138.

It belongs to the WrbA family. FMN is required as a cofactor.

It catalyses the reaction a quinone + NADH + H(+) = a quinol + NAD(+). The catalysed reaction is a quinone + NADPH + H(+) = a quinol + NADP(+). The protein is NAD(P)H dehydrogenase (quinone) of Geotalea uraniireducens (strain Rf4) (Geobacter uraniireducens).